The sequence spans 504 residues: Maturase K (504 aa).

Belongs to the intron maturase 2 family. MatK subfamily.

It is found in the plastid. Its subcellular location is the chloroplast. Functionally, usually encoded in the trnK tRNA gene intron. Probably assists in splicing its own and other chloroplast group II introns. This Turritis glabra (Tower mustard) protein is Maturase K.